Reading from the N-terminus, the 249-residue chain is Cell division protein FtsQ (249 aa).

Residues 1–6 are Cytoplasmic-facing; sequence MKFILF. A helical transmembrane segment spans residues 7–23; the sequence is ALLVSAGSWYGWKQLHS. The Periplasmic portion of the chain corresponds to 24-249; sequence QDAVSKPIRY…YKNVMKERRI (226 aa). The POTRA domain occupies 29-98; sequence KPIRYVKIEG…DAVHIKITEQ (70 aa).

This sequence belongs to the FtsQ/DivIB family. FtsQ subfamily. Part of a complex composed of FtsB, FtsL and FtsQ.

The protein localises to the cell inner membrane. Its function is as follows. Essential cell division protein. May link together the upstream cell division proteins, which are predominantly cytoplasmic, with the downstream cell division proteins, which are predominantly periplasmic. May control correct divisome assembly. The sequence is that of Cell division protein FtsQ from Methylomonas methanica (strain DSM 25384 / MC09).